The following is a 633-amino-acid chain: Phosphomethylpyrimidine synthase (633 aa).

Over residues 1 to 13 (MNIRSNPDTTLPA) the composition is skewed to polar residues. A disordered region spans residues 1-20 (MNIRSNPDTTLPAVTTGPLP). Residues Asn-221, Met-250, Tyr-279, His-315, 335–337 (SRG), 376–379 (DGLR), and Glu-415 contribute to the substrate site. Residue His-419 participates in Zn(2+) binding. A substrate-binding site is contributed by Tyr-442. Residue His-483 participates in Zn(2+) binding. Cys-563, Cys-566, and Cys-571 together coordinate [4Fe-4S] cluster.

Belongs to the ThiC family. In terms of assembly, homodimer. [4Fe-4S] cluster serves as cofactor.

The enzyme catalyses 5-amino-1-(5-phospho-beta-D-ribosyl)imidazole + S-adenosyl-L-methionine = 4-amino-2-methyl-5-(phosphooxymethyl)pyrimidine + CO + 5'-deoxyadenosine + formate + L-methionine + 3 H(+). The protein operates within cofactor biosynthesis; thiamine diphosphate biosynthesis. In terms of biological role, catalyzes the synthesis of the hydroxymethylpyrimidine phosphate (HMP-P) moiety of thiamine from aminoimidazole ribotide (AIR) in a radical S-adenosyl-L-methionine (SAM)-dependent reaction. This Bradyrhizobium sp. (strain ORS 278) protein is Phosphomethylpyrimidine synthase.